We begin with the raw amino-acid sequence, 24 residues long: Brevinin-1BYb (24 aa).

A disulfide bridge connects residues C18 and C24.

As to expression, expressed by the skin glands.

The protein localises to the secreted. Its function is as follows. Antibacterial activity against Gram-positive bacterium S.aureus and Gram-negative bacterium E.coli. Has moderate antifungal activity against C.albicans and strong hemolytic activity. The protein is Brevinin-1BYb of Rana boylii (Foothill yellow-legged frog).